A 261-amino-acid chain; its full sequence is MTASSPSIRVTDLSYSVAGRELLSKLKFHLQSGEMLAVLGRNGAGKSTLLKHLTGELGKSGVELFGQPLRDIKPAEAAKRRAVLPQQTPLSFAYEVLDVVLLGRIPHGQRETVQDRAIAAACLERVGLSGYETRDVLTLSGGEQQRVHFARTLAQLHGVIGERVLLLDEPTASLDLAHQHATLRLARELCREGVGVLAVLHDLNLAAQYADRVLMLAEGHVIACDHPAVALTPESIRTAYGHEVLVTQHPCLNCPLIVSAS.

One can recognise an ABC transporter domain in the interval 8 to 243 (IRVTDLSYSV…ESIRTAYGHE (236 aa)). 40-47 (GRNGAGKS) lines the ATP pocket.

This sequence belongs to the ABC transporter superfamily. Heme (hemin) importer (TC 3.A.1.14.5) family. As to quaternary structure, the complex is composed of two ATP-binding proteins (HmuV), two transmembrane proteins (HmuU) and a solute-binding protein (HmuT).

It localises to the cell membrane. Part of the ABC transporter complex HmuTUV involved in hemin import. Responsible for energy coupling to the transport system. This chain is Hemin import ATP-binding protein HmuV, found in Deinococcus radiodurans (strain ATCC 13939 / DSM 20539 / JCM 16871 / CCUG 27074 / LMG 4051 / NBRC 15346 / NCIMB 9279 / VKM B-1422 / R1).